The following is a 450-amino-acid chain: 3-phosphoshikimate 1-carboxyvinyltransferase (450 aa).

Lys28, Ser29, and Arg33 together coordinate 3-phosphoshikimate. Lys28 is a binding site for phosphoenolpyruvate. 2 residues coordinate phosphoenolpyruvate: Gly100 and Arg128. 3-phosphoshikimate is bound by residues Ser173, Gln175, Asp326, and Lys353. Phosphoenolpyruvate is bound at residue Gln175. The active-site Proton acceptor is Asp326. Residues Arg357 and Arg402 each coordinate phosphoenolpyruvate.

The protein belongs to the EPSP synthase family. Monomer.

Its subcellular location is the cytoplasm. It carries out the reaction 3-phosphoshikimate + phosphoenolpyruvate = 5-O-(1-carboxyvinyl)-3-phosphoshikimate + phosphate. The protein operates within metabolic intermediate biosynthesis; chorismate biosynthesis; chorismate from D-erythrose 4-phosphate and phosphoenolpyruvate: step 6/7. Catalyzes the transfer of the enolpyruvyl moiety of phosphoenolpyruvate (PEP) to the 5-hydroxyl of shikimate-3-phosphate (S3P) to produce enolpyruvyl shikimate-3-phosphate and inorganic phosphate. In Brucella abortus (strain S19), this protein is 3-phosphoshikimate 1-carboxyvinyltransferase.